Reading from the N-terminus, the 647-residue chain is Threonine--tRNA ligase (647 aa).

One can recognise a TGS domain in the interval 1 to 61 (MINITFPDGA…TEDGSIEIVT (61 aa)). Positions 242-540 (DHRKLGKELD…LIENYKGAFP (299 aa)) are catalytic. Residues Cys-336, His-387, and His-517 each contribute to the Zn(2+) site.

This sequence belongs to the class-II aminoacyl-tRNA synthetase family. As to quaternary structure, homodimer. The cofactor is Zn(2+).

It is found in the cytoplasm. The enzyme catalyses tRNA(Thr) + L-threonine + ATP = L-threonyl-tRNA(Thr) + AMP + diphosphate + H(+). Its function is as follows. Catalyzes the attachment of threonine to tRNA(Thr) in a two-step reaction: L-threonine is first activated by ATP to form Thr-AMP and then transferred to the acceptor end of tRNA(Thr). Also edits incorrectly charged L-seryl-tRNA(Thr). In Streptococcus pneumoniae (strain 70585), this protein is Threonine--tRNA ligase.